The sequence spans 382 residues: 8-amino-7-oxononanoate synthase (382 aa).

2 residues coordinate substrate: R21 and H131. Residues S178, H206, and T232 each contribute to the pyridoxal 5'-phosphate site. K235 is modified (N6-(pyridoxal phosphate)lysine). T349 lines the substrate pocket.

This sequence belongs to the class-II pyridoxal-phosphate-dependent aminotransferase family. BioF subfamily. Homodimer. Pyridoxal 5'-phosphate serves as cofactor.

The catalysed reaction is 6-carboxyhexanoyl-[ACP] + L-alanine + H(+) = (8S)-8-amino-7-oxononanoate + holo-[ACP] + CO2. The protein operates within cofactor biosynthesis; biotin biosynthesis. Functionally, catalyzes the decarboxylative condensation of pimeloyl-[acyl-carrier protein] and L-alanine to produce 8-amino-7-oxononanoate (AON), [acyl-carrier protein], and carbon dioxide. This Serratia marcescens protein is 8-amino-7-oxononanoate synthase.